A 568-amino-acid polypeptide reads, in one-letter code: Urease subunit alpha (568 aa).

The Urease domain maps to G131–Y568. Positions 136, 138, and 219 each coordinate Ni(2+). K219 bears the N6-carboxylysine mark. A substrate-binding site is contributed by H221. The Ni(2+) site is built by H248 and H274. The active-site Proton donor is H322. A Ni(2+)-binding site is contributed by D362.

This sequence belongs to the metallo-dependent hydrolases superfamily. Urease alpha subunit family. In terms of assembly, heterotrimer of UreA (gamma), UreB (beta) and UreC (alpha) subunits. Three heterotrimers associate to form the active enzyme. It depends on Ni cation as a cofactor. Post-translationally, carboxylation allows a single lysine to coordinate two nickel ions.

Its subcellular location is the cytoplasm. The enzyme catalyses urea + 2 H2O + H(+) = hydrogencarbonate + 2 NH4(+). It participates in nitrogen metabolism; urea degradation; CO(2) and NH(3) from urea (urease route): step 1/1. This is Urease subunit alpha from Cereibacter sphaeroides (strain ATCC 17023 / DSM 158 / JCM 6121 / CCUG 31486 / LMG 2827 / NBRC 12203 / NCIMB 8253 / ATH 2.4.1.) (Rhodobacter sphaeroides).